We begin with the raw amino-acid sequence, 202 residues long: MNILHLDSSILGDHSASRQLSRDVVEAYKSTHADSHVTYRDLASEALGHFSAASLAAAGTPVEARDAAQQQEVDNNEATLQQFLDADVLVIGAPMYNFSIPSQLKAWIDRIAVAGRTFRYSEAGPEGLCGGKKVIIVSTSGGLHQGLPTGAGHEELLKALFAFIGITDLQFVRAHGLAYGEEPRANAMAAAKQQIESELLAA.

Residues Ser-9, 15 to 17 (SAS), 95 to 98 (MYNF), and 139 to 142 (TSGG) contribute to the FMN site.

This sequence belongs to the azoreductase type 1 family. In terms of assembly, homodimer. It depends on FMN as a cofactor.

It carries out the reaction 2 a quinone + NADH + H(+) = 2 a 1,4-benzosemiquinone + NAD(+). The catalysed reaction is N,N-dimethyl-1,4-phenylenediamine + anthranilate + 2 NAD(+) = 2-(4-dimethylaminophenyl)diazenylbenzoate + 2 NADH + 2 H(+). Its function is as follows. Quinone reductase that provides resistance to thiol-specific stress caused by electrophilic quinones. Also exhibits azoreductase activity. Catalyzes the reductive cleavage of the azo bond in aromatic azo compounds to the corresponding amines. This chain is FMN-dependent NADH:quinone oxidoreductase 1, found in Pseudomonas syringae pv. tomato (strain ATCC BAA-871 / DC3000).